Reading from the N-terminus, the 537-residue chain is Polyadenylate-binding protein 6 (537 aa).

RRM domains follow at residues 21 to 99 (GSLY…WSQR), 112 to 188 (ANLY…KFIN), 202 to 279 (TNVY…KALK), and 304 to 381 (SNLY…VAER). The segment at 503-537 (KATTSEENRKEERRLTLSGKLSPEVKVEESGKQLQ) is disordered. Basic and acidic residues-rich tracts occupy residues 506–517 (TSEENRKEERRL) and 525–537 (PEVK…KQLQ).

The protein belongs to the polyadenylate-binding protein type-1 family. Expressed at low levels in leaves and young seedlings.

The protein localises to the cytoplasm. Its subcellular location is the nucleus. Its function is as follows. Binds the poly(A) tail of mRNA. Appears to be an important mediator of the multiple roles of the poly(A) tail in mRNA biogenesis, stability and translation. The chain is Polyadenylate-binding protein 6 (PAB6) from Arabidopsis thaliana (Mouse-ear cress).